Reading from the N-terminus, the 788-residue chain is MSRLTEDSIGDINLASTQMQGRLEEFDEISKEEENMKKRIERLRKFKNIDTNTNHTIGLQNENLENKNKDTSITKPKRRSKRDNNRIKSLTSLMEETYNKGKSFQELKQSKLGQKDAQLSIFQYFSGHKEKIGDILKRIESIEKRKLESSDVPEIEHESRILYTKKEWTDIIKRIRLRFPELSSRTKKSLKYITNKIQIQNQSQLISEYPKNNSSIWSQASAPPDTEFTDDDLKWLYDLTSEQIINESTILQNDLEESDNETPFVMTLSQVMNTTKSEDTIDREFDVISDSSPEPSPIRVSFCCRDEQSDKALHLSEQKIQVKNSIYDPEFNGNEIFSHQKDSVETAVSIESFPFVQSGQRESITGDIAEISEDNFQVSETAPRQPQAIHGTQEAPIEISSSSINRGKTNLMSEEDRASHNEAEEVIISSPIKDSELFKTPTKRTPGSKNIMSSPFRLHCNSSPLSIRSNSVTPRHERIVSEESSAYSTARSKFKLSSAQPIPSQYQFDDSEEEAIFSSMPARQAYKKRKVYHTSRLLIDGGLYVELMNENSKVKIKTIETKRQPVDSENEIRDSEDEGEHDNSLSVIEITREVDDTDDLVNLGRNPRNENDTSVLQVPSSPQIDNSNVLGSLYTSQAADSAFGSEKILEDPIRSNALELTQDEFNNMSTKDLKAKFQEWGLKPVKGKEKMIQILSETNKLVSQSQLNDSQDKPMTASQHTIKTNIYNRISFHLKQDQYWLDKILSFEPINLCMLQEWLASGSAGVKLETDILEKYCDELGITYTDIK.

Disordered stretches follow at residues 59 to 86 (LQNE…DNNR), 562 to 584 (KRQP…HDNS), and 599 to 622 (DLVN…PSSP). The span at 562–573 (KRQPVDSENEIR) shows a compositional bias: basic and acidic residues. Over residues 612 to 622 (DTSVLQVPSSP) the composition is skewed to polar residues.

This sequence belongs to the SLX4 family. In terms of assembly, forms a heterodimer with SLX1. Phosphorylated in response to DNA damage.

The protein resides in the nucleus. In terms of biological role, regulatory subunit of the SLX1-SLX4 structure-specific endonuclease that resolves DNA secondary structures generated during DNA repair and recombination. Has endonuclease activity towards branched DNA substrates, introducing single-strand cuts in duplex DNA close to junctions with ss-DNA. This chain is Structure-specific endonuclease subunit SLX4, found in Debaryomyces hansenii (strain ATCC 36239 / CBS 767 / BCRC 21394 / JCM 1990 / NBRC 0083 / IGC 2968) (Yeast).